A 591-amino-acid polypeptide reads, in one-letter code: V-type ATP synthase alpha chain (591 aa).

242-249 (GPFGAGKT) is a binding site for ATP.

Belongs to the ATPase alpha/beta chains family.

The enzyme catalyses ATP + H2O + 4 H(+)(in) = ADP + phosphate + 5 H(+)(out). In terms of biological role, produces ATP from ADP in the presence of a proton gradient across the membrane. The V-type alpha chain is a catalytic subunit. This is V-type ATP synthase alpha chain from Chlamydia trachomatis serovar A (strain ATCC VR-571B / DSM 19440 / HAR-13).